The primary structure comprises 580 residues: MSEDHTKADNLSEKDPHSPERSDSSSHEDAHAREEEESSDDDGALDGKPASLIAIVMIALSLAVFLSALDTTIVTVALPAISAHFNSTAAYTWVGSAYLLANAASTPIWGKLADIFGRKPMLLLANALFMIGSLVCALSINVGMLITARAIQGAAGGGLLTLVDTIIGDLFSLRTRGTYLGMIGGVWAIACALGPIVGGAFTSSVTWRWCFYINLPIDGLAFGIIFFFLKLKTPKTPILEGFAAIDWAGSFFIIGGTLMFLFGLQYGGITFPWDSATVICLLVFGVVCIVLFGLVEWKFARFPIIPLRLFQYRNNCGALLVAFFHSFVFISAFYYLPLYFQAVKGATPILAGVYILPAVLSTGVSAAATGAFIGNTGNYLIPMYFGMSMMILGYGLLINFDAGSGWAKLIIYQLIAGIGNGPNFQAPLVALQTKIKQSDIATGTATFNFVRNIATAISVVAGQVLYQNQLKKMTSTLQQLGPAASLIAAGDAGANTQAINALPTPQRDLARSAIADALSPMWIMYTAFAAAGLFCILLVSKTELTTTHEVTEVGLEAQKKAEAERKAERQAKDLEKAQKS.

Residues 1-34 (MSEDHTKADNLSEKDPHSPERSDSSSHEDAHARE) show a composition bias toward basic and acidic residues. The interval 1-45 (MSEDHTKADNLSEKDPHSPERSDSSSHEDAHAREEEESSDDDGAL) is disordered. Asn10 carries N-linked (GlcNAc...) asparagine glycosylation. The span at 35–44 (EEESSDDDGA) shows a compositional bias: acidic residues. A helical transmembrane segment spans residues 49–69 (PASLIAIVMIALSLAVFLSAL). A glycan (N-linked (GlcNAc...) asparagine) is linked at Asn86. 13 consecutive transmembrane segments (helical) span residues 89 to 109 (AAYTWVGSAYLLANAASTPIW), 127 to 147 (ALFMIGSLVCALSINVGMLIT), 153 to 173 (GAAGGGLLTLVDTIIGDLFSL), 181 to 201 (GMIGGVWAIACALGPIVGGAF), 209 to 229 (WCFYINLPIDGLAFGIIFFFL), 242 to 262 (FAAIDWAGSFFIIGGTLMFLF), 275 to 295 (SATVICLLVFGVVCIVLFGLV), 318 to 338 (ALLVAFFHSFVFISAFYYLPL), 348 to 368 (PILAGVYILPAVLSTGVSAAA), 380 to 400 (LIPMYFGMSMMILGYGLLINF), 409 to 429 (LIIYQLIAGIGNGPNFQAPLV), 444 to 466 (TATFNFVRNIATAISVVAGQVLY), and 519 to 539 (SPMWIMYTAFAAAGLFCILLV). The disordered stretch occupies residues 559-580 (KKAEAERKAERQAKDLEKAQKS).

It belongs to the major facilitator superfamily. TCR/Tet family.

It localises to the cell membrane. The protein resides in the vacuole membrane. Its function is as follows. Efflux pump; part of the gene cluster that mediates the biosynthesis of dothistromin (DOTH), a polyketide toxin very similar in structure to the aflatoxin precursor, versicolorin B. One function of dotC may be to transport early-stage dothistromin biosynthetic intermediates from the cytoplasm into vacuoles, thereby affecting the rate of dothistromin production. The chain is Efflux pump dotC from Dothistroma septosporum (strain NZE10 / CBS 128990) (Red band needle blight fungus).